Reading from the N-terminus, the 383-residue chain is MQPADCPRGLLPRPCRVLVLLNPRGGKGKALKLFQSRVRPLLEEAEVSFKLMLTERQNHARELVCAEELGHWDALAVMSGDGLMHEVVNGLMERPDWESAIQKPLCSLPGGSGNALAASLNYYAGHEQVTNEDLLINCTLLLCCRQLSPMNLLSLHTASGRQLYSVLSLSWGFVADVDLESEKYRSLGEIRFTVGTFFRLASLRIYQGQLAYLPVGKAASKIPASSLAQKGPANTYLVPLEEPVPPHWTVVPEQDFVLVLVLLHTHLSTEMFAAPMGRCEAGVMHLFYIRAGVSRAMLVRLFLAMQKGKHMDLDCPYLVHVPVVAFRLEPRNQRGVFSVDGELMVCEAVQGQVHPNYLWMVSGSSDSPSGRDSQRRPPPEEPI.

One can recognise a DAGKc domain in the interval 12 to 159 (PRPCRVLVLL…MNLLSLHTAS (148 aa)). ATP contacts are provided by residues 22 to 24 (NPR) and 54 to 58 (TERQN). Residue 79–82 (SGDG) participates in substrate binding. D81 acts as the Proton donor/acceptor in catalysis. ATP-binding positions include E86 and 111–113 (GSG). 2 consecutive short sequence motifs (nuclear export signal) follow at residues 147–155 (LSPMNLLSL) and 161–169 (RQLYSVLSL). D178 lines the substrate pocket. 2 residues coordinate ATP: R185 and R191. T193 is modified (phosphothreonine). S225 carries the phosphoserine modification. Residue 340-342 (DGE) participates in ATP binding. The segment at 363–383 (GSSDSPSGRDSQRRPPPEEPI) is disordered. Positions 372 to 383 (DSQRRPPPEEPI) are enriched in basic and acidic residues.

As to quaternary structure, interacts with ACY1. Binds to calmodulin. Interacts with SPHKAP. Interacts with CIB1, the interaction occurs in a calcium-dependent manner. Interacts with TRAF2. Interacts with EEF1A1; the interaction enhances SPHK1 kinase activity. Requires Mg(2+) as cofactor. In terms of tissue distribution, expressed in microglia (at protein level).

The protein resides in the cytoplasm. Its subcellular location is the nucleus. The protein localises to the cell membrane. It is found in the endosome membrane. It localises to the membrane. The protein resides in the clathrin-coated pit. Its subcellular location is the synapse. The catalysed reaction is a sphingoid base + ATP = a sphingoid 1-phosphate + ADP + H(+). It carries out the reaction L-seryl-[protein] + acetyl-CoA = O-acetyl-L-seryl-[protein] + CoA. The enzyme catalyses sphinganine + ATP = sphinganine 1-phosphate + ADP + H(+). It catalyses the reaction sphing-4-enine + ATP = sphing-4-enine 1-phosphate + ADP + H(+). The catalysed reaction is 1-O-hexadecyl-2-amino-sn-glycerol + ATP = 1-O-hexadecyl-2-desoxy-2-amino-sn-glycero-3-phosphate + ADP + H(+). Its activity is regulated as follows. Acetyltransferase activity increases in presence of the kinase substrate, sphingosine. In Purkinje cells, kinase activity on sphingosine increases in presence of VEGFA. In neurons, kinase activity increases during the first 24h in presence of Amyloid-beta protein 42 to decrease after 96h. Its function is as follows. Catalyzes the phosphorylation of sphingosine to form sphingosine 1-phosphate (SPP), a lipid mediator with both intra- and extracellular functions. Also acts on D-erythro-sphingosine and to a lesser extent sphinganine, but not other lipids, such as D,L-threo-dihydrosphingosine, N,N-dimethylsphingosine, diacylglycerol, ceramide, or phosphatidylinositol. In contrast to proapoptotic SPHK2, has a negative effect on intracellular ceramide levels, enhances cell growth and inhibits apoptosis. Involved in the regulation of inflammatory response and neuroinflammation. Via the product sphingosine 1-phosphate, stimulates TRAF2 E3 ubiquitin ligase activity, and promotes activation of NF-kappa-B in response to TNF signaling leading to IL17 secretion. In response to TNF and in parallel to NF-kappa-B activation, negatively regulates RANTES induction through p38 MAPK signaling pathway. Involved in endocytic membrane trafficking induced by sphingosine, recruited to dilate endosomes, also plays a role on later stages of endosomal maturation and membrane fusion independently of its kinase activity. In Purkinje cells, seems to be also involved in the regulation of autophagosome-lysosome fusion upon VEGFA. Functionally, has serine acetyltransferase activity on PTGS2/COX2 in an acetyl-CoA dependent manner. The acetyltransferase activity increases in presence of the kinase substrate, sphingosine. During neuroinflammation, through PTGS2 acetylation, promotes neuronal secretion of specialized preresolving mediators (SPMs), especially 15-R-lipoxin A4, which results in an increase of phagocytic microglia. This is Sphingosine kinase 1 (Sphk1) from Rattus norvegicus (Rat).